We begin with the raw amino-acid sequence, 408 residues long: GTPase Obg (408 aa).

The Obg domain occupies 1–159; that stretch reads MKFFDEARIE…RNLHLELKVL (159 aa). Residues 160-334 enclose the OBG-type G domain; it reads ADVGLLGMPN…LIFALQDFLD (175 aa). GTP contacts are provided by residues 166–173, 191–195, 213–216, 284–287, and 315–317; these read GMPNAGKS, FTTLQ, DIPG, NKLD, and SAL. 2 residues coordinate Mg(2+): Ser-173 and Thr-193. The interval 385-408 is disordered; sequence AEDALAEDALDDDADGEDADPNAR.

It belongs to the TRAFAC class OBG-HflX-like GTPase superfamily. OBG GTPase family. As to quaternary structure, monomer. The cofactor is Mg(2+).

It localises to the cytoplasm. Functionally, an essential GTPase which binds GTP, GDP and possibly (p)ppGpp with moderate affinity, with high nucleotide exchange rates and a fairly low GTP hydrolysis rate. Plays a role in control of the cell cycle, stress response, ribosome biogenesis and in those bacteria that undergo differentiation, in morphogenesis control. This chain is GTPase Obg, found in Azoarcus sp. (strain BH72).